The chain runs to 407 residues: Peptidase T (407 aa).

His82 is a binding site for Zn(2+). Residue Asp84 is part of the active site. Asp143 contacts Zn(2+). Residue Glu177 is the Proton acceptor of the active site. Residues Glu178, Asp200, and His382 each contribute to the Zn(2+) site.

The protein belongs to the peptidase M20B family. The cofactor is Zn(2+).

It is found in the cytoplasm. The enzyme catalyses Release of the N-terminal residue from a tripeptide.. Cleaves the N-terminal amino acid of tripeptides. This Streptococcus pyogenes serotype M3 (strain ATCC BAA-595 / MGAS315) protein is Peptidase T.